The primary structure comprises 156 residues: Arginine repressor (156 aa).

Belongs to the ArgR family.

The protein localises to the cytoplasm. Its pathway is amino-acid biosynthesis; L-arginine biosynthesis [regulation]. Functionally, regulates arginine biosynthesis genes. This Shewanella halifaxensis (strain HAW-EB4) protein is Arginine repressor.